Here is a 645-residue protein sequence, read N- to C-terminus: Threonine--tRNA ligase (645 aa).

The TGS domain maps to 1-63; that stretch reads MEQINIQFPD…ETDGSIEIVT (63 aa). The segment at 242–540 is catalytic; that stretch reads DHRKIGKELE…LTEETKGAFP (299 aa). Zn(2+) is bound by residues Cys336, His387, and His517.

It belongs to the class-II aminoacyl-tRNA synthetase family. Homodimer. Requires Zn(2+) as cofactor.

Its subcellular location is the cytoplasm. The catalysed reaction is tRNA(Thr) + L-threonine + ATP = L-threonyl-tRNA(Thr) + AMP + diphosphate + H(+). Its function is as follows. Catalyzes the attachment of threonine to tRNA(Thr) in a two-step reaction: L-threonine is first activated by ATP to form Thr-AMP and then transferred to the acceptor end of tRNA(Thr). Also edits incorrectly charged L-seryl-tRNA(Thr). In Staphylococcus aureus (strain NCTC 8325 / PS 47), this protein is Threonine--tRNA ligase.